Consider the following 188-residue polypeptide: Elongation factor P-like protein (188 aa).

This sequence belongs to the elongation factor P family.

The polypeptide is Elongation factor P-like protein (Aliivibrio fischeri (strain MJ11) (Vibrio fischeri)).